Reading from the N-terminus, the 156-residue chain is Transcription elongation factor GreA (156 aa).

Residues Ile6 to Glu75 adopt a coiled-coil conformation.

It belongs to the GreA/GreB family.

Its function is as follows. Necessary for efficient RNA polymerase transcription elongation past template-encoded arresting sites. The arresting sites in DNA have the property of trapping a certain fraction of elongating RNA polymerases that pass through, resulting in locked ternary complexes. Cleavage of the nascent transcript by cleavage factors such as GreA or GreB allows the resumption of elongation from the new 3'terminus. GreA releases sequences of 2 to 3 nucleotides. This is Transcription elongation factor GreA from Thermosipho africanus (strain TCF52B).